The primary structure comprises 238 residues: E3 ubiquitin-protein ligase ZNRF2 (238 aa).

The segment at methionine 1 to leucine 137 is disordered. Residue glycine 2 is the site of N-myristoyl glycine attachment. Serine 20, serine 24, serine 75, serine 82, serine 107, serine 110, serine 141, serine 147, and serine 189 each carry phosphoserine. A compositionally biased stretch (low complexity) spans glycine 35–glycine 77. The RING-type; atypical zinc-finger motif lies at cysteine 195–proline 236.

Interacts with UBE2N. Interacts with ZNRF1. Interacts (when phosphorylated) with YWHAE. Post-translationally, phosphorylated; leading to binding to YWHAE. Phosphorylated by MTOR at Ser-147 and dephosphorylated by PP6C. Ser-147 phosphorylation stimulates vesicle-to-cytosol translocation. Expressed primarily in the nervous system. Expression is more intense in the granular cell layer of hippocampus, Purkinje cell layer of the cerebellum and the granular cell layer of the olfactory bulb. Detected in sensory neurons but not expressed in sympatic or enteric neurons. Expressed in testis, adipose tissue, columnar epithelial cells of the gut.

Its subcellular location is the endosome membrane. The protein localises to the lysosome membrane. It is found in the presynaptic cell membrane. The protein resides in the cytoplasm. The enzyme catalyses S-ubiquitinyl-[E2 ubiquitin-conjugating enzyme]-L-cysteine + [acceptor protein]-L-lysine = [E2 ubiquitin-conjugating enzyme]-L-cysteine + N(6)-ubiquitinyl-[acceptor protein]-L-lysine.. It functions in the pathway protein modification; protein ubiquitination. E3 ubiquitin-protein ligase that plays a role in the establishment and maintenance of neuronal transmission and plasticity. Ubiquitinates the Na(+)/K(+) ATPase alpha-1 subunit/ATP1A1 and thereby influences its endocytosis and/or degradation. Also acts as a positive regulator of mTORC1 activation by amino acids, which functions upstream of the V-ATPase and of Rag-GTPases. In turn, phosphorylation by mTOR leads to its inhibition via targeting to the cytosol allowing a self-regulating feedback mechanism. This is E3 ubiquitin-protein ligase ZNRF2 (Znrf2) from Mus musculus (Mouse).